The following is a 211-amino-acid chain: Thymidylate kinase (211 aa).

11-18 (GPDGAGKT) lines the ATP pocket.

The protein belongs to the thymidylate kinase family.

The enzyme catalyses dTMP + ATP = dTDP + ADP. Phosphorylation of dTMP to form dTDP in both de novo and salvage pathways of dTTP synthesis. This chain is Thymidylate kinase, found in Streptococcus equi subsp. zooepidemicus (strain H70).